The primary structure comprises 757 residues: Protein Lines homolog 1 (757 aa).

Phosphoserine is present on Ser-635.

The protein belongs to the protein lines family. As to expression, expressed in adult testis, prostate, prostate, spleen, thymus, skeletal muscle, fetal kidney and brain.

In Homo sapiens (Human), this protein is Protein Lines homolog 1.